Reading from the N-terminus, the 619-residue chain is MSRMVDTMGDLLTARRHFDRAMTIKNGQGCVAALPEFVAATEADPSMADAWLGRIACGDRDLASLKQLNAHSEWLHRETTRIGRTLAAEVQLGPSIGITVTDASQVGLALSSALTIAGEYAKADALLANRELLDSWRNYQWHQLARAFLMYVTQRWPDVLSTAAEDLPPQAIVMPAVTASICALAAHAAAHLGQGRVALDWLDRVDVIGHSRSSGRFGADVLTAAIGPADIPLLVADLAYVRGMVYRQLHEEDKAQIWLSKATINGVLTDAAKEALADPNLRLIVTDERTIASRSDRWDASTAKSRDQLDDDNAAQRRGELLAEGRELLAKQVGLAAVKQAVSALEDQLEVRMMRLEHGLPVEGQTNHMLLVGPPGTGKTTTAEALGKIYAGMGIVRHPEIREVRRSDFCGHYIGESGPKTNELIEKSLGRIIFMDEFYSLIERHQDGTPDMIGMEAVNQLLVQLETHRFDFCFIGAGYEDQVDEFLTVNPGLAGRFNRKLRFESYSPVEIVEIGHRYATPRASQLDDAAREVFLDAVTTIRNYTTPSGQHGIDAMQNGRFARNVIERAEGFRDTRVVAQKRAGQPVSVQDLQIITATDIDAAIRSVCSDNRDMAAIVW.

373–380 contacts ATP; it reads GPPGTGKT.

The protein belongs to the CbxX/CfxQ family. Part of the ESX-2 / type VII secretion system (T7SS), which is composed of cytosolic and membrane components.

It localises to the cytoplasm. Part of an ESX-2 / type VII specialized secretion system (T7SS), which exports several proteins. May have ATPase activity and might provide energy for the export of ESX-2 substrates. The chain is ESX-2 secretion system protein EccA2 from Mycobacterium bovis (strain ATCC BAA-935 / AF2122/97).